A 211-amino-acid polypeptide reads, in one-letter code: Small ribosomal subunit protein uS3 (211 aa).

One can recognise a KH type-2 domain in the interval 16-85; it reads IDEYFKTKLV…NPQIEVKQVE (70 aa).

This sequence belongs to the universal ribosomal protein uS3 family. In terms of assembly, part of the 30S ribosomal subunit.

Functionally, binds the lower part of the 30S subunit head. The chain is Small ribosomal subunit protein uS3 from Methanococcus maripaludis (strain C5 / ATCC BAA-1333).